The chain runs to 790 residues: SH3 domain-containing protein 19 (790 aa).

Disordered stretches follow at residues 21 to 196 (EGQT…PVLQ) and 241 to 374 (EPIK…MDLQ). Residue S65 is modified to Phosphoserine. Positions 287 to 296 (NTFSTVSGKL) are enriched in polar residues. The span at 336-351 (QQPPTKVPPERPPPPK) shows a compositional bias: pro residues. Residues 342–358 (VPPERPPPPKLSATRRS) are interaction with SH3GL1. Residues 365-374 (NRSSSDMDLQ) show a composition bias toward polar residues. Residue S369 is modified to Phosphoserine. SH3 domains follow at residues 415–477 (LSVP…PLDE), 495–554 (SGAP…VIID), 571–630 (VKGS…PVED), 661–720 (LPAE…PCPA), and 730–789 (PKGR…FLQI). Residue S762 is modified to Phosphoserine.

In terms of assembly, interacts with ADAM12. Isoform 4 and isoform 5 (but not isoform 1 and isoform 2) interact with ADAM9, ADAM10, ADAM15 and ADAM17. Interacts with SH3GL1 SH3 domain. Interacts via SH3 3 and SH3 4 or SH3 4 and SH3 5 domains with SOS2. Probably forms a trimeric complex with SH3GL1 and SOS2. Interacts with SH3YL1. Widely expressed with highest levels in heart, skeletal muscle, kidney, liver, placenta, small intestine and lung. Expressed at low levels in colon, thymus, spleen and leukocytes.

It localises to the cytoplasm. It is found in the nucleus. May play a role in regulating A disintegrin and metalloproteases (ADAMs) in the signaling of EGFR-ligand shedding. May be involved in suppression of Ras-induced cellular transformation and Ras-mediated activation of ELK1. Plays a role in the regulation of cell morphology and cytoskeletal organization. The protein is SH3 domain-containing protein 19 (SH3D19) of Homo sapiens (Human).